The following is a 449-amino-acid chain: Elongation factor 1-alpha 1 (449 aa).

One can recognise a tr-type G domain in the interval 5-230 (KVHMNLVVVG…DMLEPPVRPS (226 aa)). Residues 14-21 (GHVDAGKS) are G1. Residue 14 to 21 (GHVDAGKS) participates in GTP binding. A G2 region spans residues 70–74 (GITID). A G3 region spans residues 91–94 (DAPG). GTP-binding positions include 91 to 95 (DAPGH) and 153 to 156 (NKMD). Residues 153 to 156 (NKMD) are G4. The interval 194 to 196 (SGW) is G5. Position 362 is a 5-glutamyl glycerylphosphorylethanolamine (E362).

This sequence belongs to the TRAFAC class translation factor GTPase superfamily. Classic translation factor GTPase family. EF-Tu/EF-1A subfamily. Phosphatidylethanolamine (PE) is a direct precursor of the ethanolamine-phosphoglycerol (EPG) moiety.

It localises to the cytoplasm. Functionally, this protein promotes the GTP-dependent binding of aminoacyl-tRNA to the A-site of ribosomes during protein biosynthesis. In Trypanosoma brucei brucei (strain 927/4 GUTat10.1), this protein is Elongation factor 1-alpha 1 (TEF1).